The chain runs to 79 residues: D-alanyl carrier protein (79 aa).

In terms of domain architecture, Carrier spans 1–77 (MDTKQAVLDI…KIIAKVESLR (77 aa)). Ser-35 is subject to O-(pantetheine 4'-phosphoryl)serine.

Belongs to the DltC family. Post-translationally, 4'-phosphopantetheine is transferred from CoA to a specific serine of apo-DCP.

It localises to the cytoplasm. It participates in cell wall biogenesis; lipoteichoic acid biosynthesis. Its function is as follows. Carrier protein involved in the D-alanylation of lipoteichoic acid (LTA). The loading of thioester-linked D-alanine onto DltC is catalyzed by D-alanine--D-alanyl carrier protein ligase DltA. The DltC-carried D-alanyl group is further transferred to cell membrane phosphatidylglycerol (PG) by forming an ester bond, probably catalyzed by DltD. D-alanylation of LTA plays an important role in modulating the properties of the cell wall in Gram-positive bacteria, influencing the net charge of the cell wall. The protein is D-alanyl carrier protein of Lactobacillus gasseri (strain ATCC 33323 / DSM 20243 / BCRC 14619 / CIP 102991 / JCM 1131 / KCTC 3163 / NCIMB 11718 / NCTC 13722 / AM63).